Reading from the N-terminus, the 397-residue chain is Acetate kinase 2 (397 aa).

Asparagine 10 lines the Mg(2+) pocket. Position 17 (lysine 17) interacts with ATP. Residue arginine 90 coordinates substrate. Residue aspartate 147 is the Proton donor/acceptor of the active site. ATP-binding positions include 207–211, 281–283, and 329–333; these read HLGNG, DAR, and GIGEN. Glutamate 385 contributes to the Mg(2+) binding site.

Belongs to the acetokinase family. In terms of assembly, homodimer. Mg(2+) serves as cofactor. Requires Mn(2+) as cofactor.

Its subcellular location is the cytoplasm. It catalyses the reaction acetate + ATP = acetyl phosphate + ADP. It functions in the pathway metabolic intermediate biosynthesis; acetyl-CoA biosynthesis; acetyl-CoA from acetate: step 1/2. In terms of biological role, catalyzes the formation of acetyl phosphate from acetate and ATP. Can also catalyze the reverse reaction. This chain is Acetate kinase 2, found in Vibrio cholerae serotype O1 (strain ATCC 39315 / El Tor Inaba N16961).